The sequence spans 189 residues: Ribosome maturation factor RimM (189 aa).

One can recognise a PRC barrel domain in the interval 113–189 (DGEYYWVDLL…TIVADWQPDY (77 aa)).

It belongs to the RimM family. In terms of assembly, binds ribosomal protein uS19.

Its subcellular location is the cytoplasm. An accessory protein needed during the final step in the assembly of 30S ribosomal subunit, possibly for assembly of the head region. Essential for efficient processing of 16S rRNA. May be needed both before and after RbfA during the maturation of 16S rRNA. It has affinity for free ribosomal 30S subunits but not for 70S ribosomes. In Delftia acidovorans (strain DSM 14801 / SPH-1), this protein is Ribosome maturation factor RimM.